A 256-amino-acid chain; its full sequence is Catechol O-methyltransferase A (256 aa).

Positions 1 to 27 (MLWVVLAVVVVLASVLVLLRQSSGLLA) are cleaved as a signal peptide. Asn58 is a glycosylation site (N-linked (GlcNAc...) asparagine). Residues Val84, Ser114, Glu132, and Asp183 each contribute to the S-adenosyl-L-methionine site. Residue Asp183 participates in Mg(2+) binding. Position 186 (Lys186) interacts with substrate. Mg(2+) is bound by residues Asp211 and Asn212. Substrate contacts are provided by Asn212 and Glu241.

Belongs to the class I-like SAM-binding methyltransferase superfamily. Cation-dependent O-methyltransferase family. Mg(2+) is required as a cofactor. Widely expressed. Has higher expression in females compared to males. Strongly expressed in liver and diencephalon. Expressed at lower levels in hindbrain, spinal cord, eye, telencephalon, spleen, gut, gill and muscle. Detected in ovary and testis. In eye, detected in all layers of the retina with highest expression in the inner nuclear layer. In gut, expressed in the lamina propria but has little or no expression in gut epithelium. In brain, has strongest expression near the midline of the telencephalon, in the periventricular gray zone of the optic tectum, in the preglomerular nucleus, and near the walls of the diencephalic ventricle.

Its subcellular location is the secreted. The enzyme catalyses a catechol + S-adenosyl-L-methionine = a guaiacol + S-adenosyl-L-homocysteine + H(+). Functionally, catalyzes the O-methylation, and thereby the inactivation, of catecholamine neurotransmitters and catechol hormones. Shows highest activity towards catecholestrogens and dobutamine. Also has lower activity towards L-DOPA, dopamine and epinephrine. Active towards the xenobiotic compounds methyl-DOPA, carbidopa, isoproterenol, and apomorphine. The protein is Catechol O-methyltransferase A of Danio rerio (Zebrafish).